We begin with the raw amino-acid sequence, 242 residues long: Probable proteasome subunit alpha type-7 (242 aa).

Belongs to the peptidase T1A family. In terms of assembly, the 26S proteasome consists of a 20S proteasome core and two 19S regulatory subunits. The 20S proteasome core is composed of 28 subunits that are arranged in four stacked rings, resulting in a barrel-shaped structure. The two end rings are each formed by seven alpha subunits, and the two central rings are each formed by seven beta subunits. The catalytic chamber with the active sites is on the inside of the barrel.

The protein resides in the cytoplasm. The protein localises to the nucleus. Functionally, the proteasome degrades poly-ubiquitinated proteins in the cytoplasm and in the nucleus. It is essential for the regulated turnover of proteins and for the removal of misfolded proteins. The proteasome is a multicatalytic proteinase complex that is characterized by its ability to cleave peptides with Arg, Phe, Tyr, Leu, and Glu adjacent to the leaving group at neutral or slightly basic pH. It has an ATP-dependent proteolytic activity. In Encephalitozoon cuniculi (strain GB-M1) (Microsporidian parasite), this protein is Probable proteasome subunit alpha type-7 (PRE10).